The following is a 479-amino-acid chain: Anaerobic nitric oxide reductase flavorubredoxin (479 aa).

The zinc metallo-hydrolase stretch occupies residues 30–210 (LRGSSYNSYL…PFSRLVTPKI (181 aa)). Positions 79, 81, 83, 147, 166, and 227 each coordinate Fe cation. The Flavodoxin-like domain maps to 254–393 (ITIFYDTMSN…LCREHGREIA (140 aa)). Residues 260–264 (TMSNN) and 342–369 (AFGSHGWSGGAVDRLSTRLQDAGFEMSL) each bind FMN. The region spanning 423–474 (GPRMQCSVCQWIYDPAKGEPMQDVAPGTPWSEVPDNFLCPECSLGKDVFEEL) is the Rubredoxin-like domain. 4 residues coordinate Fe cation: Cys428, Cys431, Cys461, and Cys464.

In the N-terminal section; belongs to the zinc metallo-hydrolase group 3 family. Homotetramer. The cofactor is Fe cation. Requires FMN as cofactor.

The protein localises to the cytoplasm. The protein operates within nitrogen metabolism; nitric oxide reduction. Functionally, anaerobic nitric oxide reductase; uses NADH to detoxify nitric oxide (NO), protecting several 4Fe-4S NO-sensitive enzymes. Has at least 2 reductase partners, only one of which (NorW, flavorubredoxin reductase) has been identified. NO probably binds to the di-iron center; electrons enter from the NorW at rubredoxin and are transferred sequentially to the FMN center and the di-iron center. Also able to function as an aerobic oxygen reductase. This is Anaerobic nitric oxide reductase flavorubredoxin from Shigella dysenteriae serotype 1 (strain Sd197).